A 403-amino-acid polypeptide reads, in one-letter code: Methylthioribose-1-phosphate isomerase (403 aa).

Asp-277 functions as the Proton donor in the catalytic mechanism.

It belongs to the eIF-2B alpha/beta/delta subunits family. MtnA subfamily.

The protein resides in the cytoplasm. It localises to the nucleus. It carries out the reaction 5-(methylsulfanyl)-alpha-D-ribose 1-phosphate = 5-(methylsulfanyl)-D-ribulose 1-phosphate. Its pathway is amino-acid biosynthesis; L-methionine biosynthesis via salvage pathway; L-methionine from S-methyl-5-thio-alpha-D-ribose 1-phosphate: step 1/6. Catalyzes the interconversion of methylthioribose-1-phosphate (MTR-1-P) into methylthioribulose-1-phosphate (MTRu-1-P). This chain is Methylthioribose-1-phosphate isomerase, found in Lodderomyces elongisporus (strain ATCC 11503 / CBS 2605 / JCM 1781 / NBRC 1676 / NRRL YB-4239) (Yeast).